Here is a 156-residue protein sequence, read N- to C-terminus: Toxin Res (156 aa).

This sequence belongs to the MbcT/ParT/Res family. Homodimer. Forms a complex with cognate antitoxin Xre.

Functionally, toxic component of a type II toxin-antitoxin (TA) system. Expression in E.coli inhibits cell growth; bacteriostasis is neutralized by expression of cognate antitoxin Xre. Expression in E.coli leads to almost complete depletion of intracellular NAD(+): NAD(+) levels are partially restored when coexpressed with antitoxin Xre. This chain is Toxin Res, found in Photorhabdus laumondii subsp. laumondii (strain DSM 15139 / CIP 105565 / TT01) (Photorhabdus luminescens subsp. laumondii).